The chain runs to 393 residues: Riboflavin biosynthesis protein RibBA (393 aa).

The tract at residues 1–200 is DHBP synthase; the sequence is MQFDNIDSAL…IDDLIEYRKK (200 aa). D-ribulose 5-phosphate is bound by residues 27–28, Asp-32, 139–143, and Glu-163; these read RE and RNGHT. Residue Glu-28 participates in Mg(2+) binding. Residue His-142 participates in Mg(2+) binding. The tract at residues 201–393 is GTP cyclohydrolase II; sequence LEPEIEFKAK…TKKIKMGHLI (193 aa). A GTP-binding site is contributed by 249–253; that stretch reads RLHSA. Positions 254, 265, and 267 each coordinate Zn(2+). Residues Gln-270, 291–293, and Thr-313 contribute to the GTP site; that span reads EGR. The active-site Proton acceptor; for GTP cyclohydrolase activity is Asp-325. Residue Arg-327 is the Nucleophile; for GTP cyclohydrolase activity of the active site. GTP is bound by residues Ser-348 and Lys-353.

The protein in the N-terminal section; belongs to the DHBP synthase family. It in the C-terminal section; belongs to the GTP cyclohydrolase II family. Mg(2+) serves as cofactor. It depends on Mn(2+) as a cofactor. Zn(2+) is required as a cofactor.

It carries out the reaction D-ribulose 5-phosphate = (2S)-2-hydroxy-3-oxobutyl phosphate + formate + H(+). The catalysed reaction is GTP + 4 H2O = 2,5-diamino-6-hydroxy-4-(5-phosphoribosylamino)-pyrimidine + formate + 2 phosphate + 3 H(+). It functions in the pathway cofactor biosynthesis; riboflavin biosynthesis; 2-hydroxy-3-oxobutyl phosphate from D-ribulose 5-phosphate: step 1/1. It participates in cofactor biosynthesis; riboflavin biosynthesis; 5-amino-6-(D-ribitylamino)uracil from GTP: step 1/4. Catalyzes the conversion of D-ribulose 5-phosphate to formate and 3,4-dihydroxy-2-butanone 4-phosphate. Functionally, catalyzes the conversion of GTP to 2,5-diamino-6-ribosylamino-4(3H)-pyrimidinone 5'-phosphate (DARP), formate and pyrophosphate. In Staphylococcus aureus (strain MRSA252), this protein is Riboflavin biosynthesis protein RibBA.